The following is a 438-amino-acid chain: Glutamyl-tRNA(Gln) amidotransferase subunit D (438 aa).

The Asparaginase/glutaminase domain occupies 92–422 (PEVTIIGTGG…EEVRKMMLTN (331 aa)). Catalysis depends on residues threonine 102, threonine 178, aspartate 179, and lysine 256.

This sequence belongs to the asparaginase 1 family. GatD subfamily. In terms of assembly, heterodimer of GatD and GatE.

The enzyme catalyses L-glutamyl-tRNA(Gln) + L-glutamine + ATP + H2O = L-glutaminyl-tRNA(Gln) + L-glutamate + ADP + phosphate + H(+). Allows the formation of correctly charged Gln-tRNA(Gln) through the transamidation of misacylated Glu-tRNA(Gln) in organisms which lack glutaminyl-tRNA synthetase. The reaction takes place in the presence of glutamine and ATP through an activated gamma-phospho-Glu-tRNA(Gln). The GatDE system is specific for glutamate and does not act on aspartate. The chain is Glutamyl-tRNA(Gln) amidotransferase subunit D from Pyrococcus abyssi (strain GE5 / Orsay).